The chain runs to 111 residues: UPF0060 membrane protein Aave_2845 (111 aa).

A run of 4 helical transmembrane segments spans residues 7-27, 33-53, 63-83, and 90-110; these read FLLYAVTALAEIAGCYLPWLW, SAWLLVPGAACLALFAWLLTL, AAYGGVYVAVALGWLWAVDGI, and LAGAAVTLAGMAIIAFAPRGA.

This sequence belongs to the UPF0060 family.

Its subcellular location is the cell inner membrane. In Paracidovorax citrulli (strain AAC00-1) (Acidovorax citrulli), this protein is UPF0060 membrane protein Aave_2845.